The chain runs to 230 residues: Phosphatidylserine decarboxylase proenzyme (230 aa).

Catalysis depends on serine 186, which acts as the Schiff-base intermediate with substrate; via pyruvic acid. Serine 186 bears the Pyruvic acid (Ser); by autocatalysis mark.

This sequence belongs to the phosphatidylserine decarboxylase family. PSD-A subfamily. As to quaternary structure, heterodimer of a large membrane-associated beta subunit and a small pyruvoyl-containing alpha subunit. Requires pyruvate as cofactor. Is synthesized initially as an inactive proenzyme. Formation of the active enzyme involves a self-maturation process in which the active site pyruvoyl group is generated from an internal serine residue via an autocatalytic post-translational modification. Two non-identical subunits are generated from the proenzyme in this reaction, and the pyruvate is formed at the N-terminus of the alpha chain, which is derived from the carboxyl end of the proenzyme. The post-translation cleavage follows an unusual pathway, termed non-hydrolytic serinolysis, in which the side chain hydroxyl group of the serine supplies its oxygen atom to form the C-terminus of the beta chain, while the remainder of the serine residue undergoes an oxidative deamination to produce ammonia and the pyruvoyl prosthetic group on the alpha chain.

It is found in the cell membrane. The catalysed reaction is a 1,2-diacyl-sn-glycero-3-phospho-L-serine + H(+) = a 1,2-diacyl-sn-glycero-3-phosphoethanolamine + CO2. It functions in the pathway phospholipid metabolism; phosphatidylethanolamine biosynthesis; phosphatidylethanolamine from CDP-diacylglycerol: step 2/2. In terms of biological role, catalyzes the formation of phosphatidylethanolamine (PtdEtn) from phosphatidylserine (PtdSer). The chain is Phosphatidylserine decarboxylase proenzyme from Wolbachia sp. subsp. Brugia malayi (strain TRS).